The primary structure comprises 250 residues: Electron transfer flavoprotein subunit beta (250 aa).

The protein belongs to the ETF beta-subunit/FixA family. In terms of assembly, heterodimer of an alpha and a beta subunit. The cofactor is FAD. Requires AMP as cofactor.

Its subcellular location is the mitochondrion matrix. The electron transfer flavoprotein serves as a specific electron acceptor for several dehydrogenases, including five acyl-CoA dehydrogenases, glutaryl-CoA and sarcosine dehydrogenase. It transfers the electrons to the main mitochondrial respiratory chain via ETF-ubiquinone oxidoreductase (ETF dehydrogenase). The protein is Electron transfer flavoprotein subunit beta (etfb) of Dictyostelium discoideum (Social amoeba).